Consider the following 515-residue polypeptide: GMP synthase [glutamine-hydrolyzing] (515 aa).

A Glutamine amidotransferase type-1 domain is found at 10-200; sequence TIIVLDFGSQ…VFGVCGCSEG (191 aa). Catalysis depends on Cys87, which acts as the Nucleophile. Residues His174 and Glu176 contribute to the active site. The region spanning 201 to 390 is the GMPS ATP-PPase domain; the sequence is WNMENFIEVE…LGIPDEIVWR (190 aa). 228-234 is an ATP binding site; it reads SGGVDSS.

As to quaternary structure, homodimer.

The catalysed reaction is XMP + L-glutamine + ATP + H2O = GMP + L-glutamate + AMP + diphosphate + 2 H(+). It functions in the pathway purine metabolism; GMP biosynthesis; GMP from XMP (L-Gln route): step 1/1. In terms of biological role, catalyzes the synthesis of GMP from XMP. In Bacillus anthracis (strain A0248), this protein is GMP synthase [glutamine-hydrolyzing].